We begin with the raw amino-acid sequence, 661 residues long: Cyclic di-GMP phosphodiesterase PdeR (661 aa).

One can recognise a PAS domain in the interval 109-179 (GLSFAEQVVS…RRNNRVFFRS (71 aa)). One can recognise a GGDEF domain in the interval 265 to 397 (NKVGVVYLDL…GRGQFCVFTP (133 aa)). Residues 406-658 (YLWLDTNLRK…AFERWYKRYL (253 aa)) form the EAL domain.

As to quaternary structure, interacts with DgcM and MlrA.

The enzyme catalyses 3',3'-c-di-GMP + H2O = 5'-phosphoguanylyl(3'-&gt;5')guanosine + H(+). Functionally, part of a signaling cascade that regulates curli biosynthesis. The cascade is composed of two cyclic-di-GMP (c-di-GMP) control modules, in which c-di-GMP controlled by the DgcE/PdeH pair (module I) regulates the activity of the DgcM/PdeR pair (module II), which in turn regulates activity of the transcription factor MlrA and expression of the master biofilm regulator csgD. PdeR acts as a trigger enzyme that connects modules I and II. It inhibits DgcM and MlrA by direct interaction. Inhibition is relieved when PdeR binds and degrades c-di-GMP generated by module I. This is Cyclic di-GMP phosphodiesterase PdeR from Escherichia coli (strain K12).